The chain runs to 118 residues: MYVQLKIINFYKTHQKPNLRIVYFFFFFGLETFFSIINPNDLTFFNYVIGVNNLDLTKKPNSSVDELIYFFDYLDSCWSSLMKSSNQNSKPIPWGLLLSNLIRWYDSNTIEALINNIL.

Residues 21 to 38 (IVYFFFFFGLETFFSIIN) form a helical membrane-spanning segment.

It localises to the membrane. This is an uncharacterized protein from Dictyostelium discoideum (Social amoeba).